The sequence spans 243 residues: 1-(5-phosphoribosyl)-5-[(5-phosphoribosylamino)methylideneamino] imidazole-4-carboxamide isomerase (243 aa).

Asp-8 functions as the Proton acceptor in the catalytic mechanism. Residue Asp-130 is the Proton donor of the active site.

This sequence belongs to the HisA/HisF family.

It is found in the cytoplasm. The catalysed reaction is 1-(5-phospho-beta-D-ribosyl)-5-[(5-phospho-beta-D-ribosylamino)methylideneamino]imidazole-4-carboxamide = 5-[(5-phospho-1-deoxy-D-ribulos-1-ylimino)methylamino]-1-(5-phospho-beta-D-ribosyl)imidazole-4-carboxamide. The protein operates within amino-acid biosynthesis; L-histidine biosynthesis; L-histidine from 5-phospho-alpha-D-ribose 1-diphosphate: step 4/9. In Acinetobacter baumannii (strain AB307-0294), this protein is 1-(5-phosphoribosyl)-5-[(5-phosphoribosylamino)methylideneamino] imidazole-4-carboxamide isomerase.